The following is a 170-amino-acid chain: Transcription factor E (170 aa).

In terms of domain architecture, HTH TFE/IIEalpha-type spans 1 to 93; the sequence is MKDVYLYIVE…TWYVDDEIIK (93 aa).

The protein belongs to the TFE family. Monomer. Interaction with RNA polymerase subunits RpoF and RpoE is necessary for Tfe stimulatory transcription activity. Able to interact with Tbp and RNA polymerase in the absence of DNA promoter. Interacts both with the preinitiation and elongation complexes.

Functionally, transcription factor that plays a role in the activation of archaeal genes transcribed by RNA polymerase. Facilitates transcription initiation by enhancing TATA-box recognition by TATA-box-binding protein (Tbp), and transcription factor B (Tfb) and RNA polymerase recruitment. Not absolutely required for transcription in vitro, but particularly important in cases where Tbp or Tfb function is not optimal. It dynamically alters the nucleic acid-binding properties of RNA polymerases by stabilizing the initiation complex and destabilizing elongation complexes. Seems to translocate with the RNA polymerase following initiation and acts by binding to the non template strand of the transcription bubble in elongation complexes. The sequence is that of Transcription factor E from Pyrobaculum aerophilum (strain ATCC 51768 / DSM 7523 / JCM 9630 / CIP 104966 / NBRC 100827 / IM2).